The chain runs to 226 residues: Phospholipase Culp4 (226 aa).

An N-terminal signal peptide occupies residues 1-45 (MIPRPQPHSGRWRAGAARRLTSLVAAAFAAATLLLTPALAPPASA). A disulfide bond links cysteine 47 and cysteine 117. The Nucleophile role is filled by serine 128. Residues cysteine 191 and cysteine 198 are joined by a disulfide bond. Residue aspartate 195 is part of the active site. Histidine 207 (proton donor/acceptor) is an active-site residue.

Belongs to the cutinase family. Homodimer.

It localises to the cell membrane. The protein localises to the secreted. Its subcellular location is the cell wall. It catalyses the reaction 1,2-dihexadecanoyl-sn-glycero-3-phosphocholine + H2O = 1-hexadecanoyl-sn-glycero-3-phosphocholine + hexadecanoate + H(+). The catalysed reaction is a butanoate ester + H2O = an aliphatic alcohol + butanoate + H(+). Its activity is regulated as follows. Inhibited by high concentrations of paraoxon. Inhibited by tetrahydrolipstatin (THL), a specific lipase inhibitor. In terms of biological role, A2-type phospholipase, which is probably involved in the degradation of macrophage membrane. Hydrolyzes dipalmitoylphosphatidylcholine. Also shows moderate esterase activity and hydrolyzes the p-nitrophenol-linked aliphatic ester pNP-butyrate (C4). Does not exhibit cutinase activity. This is Phospholipase Culp4 from Mycobacterium tuberculosis (strain ATCC 25618 / H37Rv).